Here is a 609-residue protein sequence, read N- to C-terminus: Meiotically up-regulated gene 28 protein (609 aa).

RRM domains are found at residues 20–103 (ISIY…YTHI) and 419–499 (CNLF…YAEK).

The protein localises to the cytoplasm. Its function is as follows. Has a role in sporulation. This is Meiotically up-regulated gene 28 protein (mug28) from Schizosaccharomyces pombe (strain 972 / ATCC 24843) (Fission yeast).